A 454-amino-acid chain; its full sequence is MRRFTLFVFFLSISIAYADFDFEDYNFATFNEIYDNEIPDDIPSSRHFLKSSRGTVGLPKTATEMMTRFNENLLNFLKSKSENDWKLIMELMSPDAFIETCMESAYGLSMDQFHKWITFLSNYYAEVGLTSTKIKDNSETGVTTELVYYTVLRNGEKGSDKWAMSATLNKKKGHFCINTLHMLSECKNIPKKPSLEPAIPIETFISSLKKKLVNDIFLNGGLHYKSAYESMYNYITPATKVFICDVGKMNGNQFVEYWYKRFGKVQTYSEHVFDISNNGTNWHVDFEVTYESEPGKFYRDRYQFSMNKYTNVKVEYFENFLDWRIYQIQQNCTESRTKMSKSDASVVKMALASRRWDQMLNKGLSWDTLQAFKEMFDKSKFHGYTCGMKFENWAKFDNWLTGFSNFYAKSVPKQTNVYAYQDSKIGFWIVNTMSAASDNSTSTHRVFFEGYYVC.

Positions 1–18 (MRRFTLFVFFLSISIAYA) are cleaved as a signal peptide.

This is an uncharacterized protein from Caenorhabditis elegans.